A 135-amino-acid chain; its full sequence is Protein PsiE homolog (135 aa).

4 helical membrane passes run 20 to 40 (VGLIALAAILVVFLIKETFHL), 54 to 74 (YMLIEGIVIYFLYFEFIALIV), 82 to 102 (HFPLRYFIYIGITAIIRLIIV), and 107 to 127 (PIDTLIYSGSILLLVVTLYLA).

The protein belongs to the PsiE family.

The protein resides in the cell inner membrane. This is Protein PsiE homolog from Yersinia enterocolitica serotype O:8 / biotype 1B (strain NCTC 13174 / 8081).